A 540-amino-acid polypeptide reads, in one-letter code: MSTSEFVLAQSATVPAPDIEYGQLSPMLIVFGVAVAGVLVEAFLPRRGRYSSHLVLALGGLTAAFVAVVLLAGTRDSVVGGAVAVDGPTLFLQGTILLISIPAILIIAERSVDSGVAAATAEVTAVRGAEPEGGTDAFTPQAFAVPGSVAEREATRNAPGHTEVFPLTLFAVGGMLLFPASNDLLTMFVALEVLSLPLYLLCGLARRRRLLSQEAALKYFLLGAFSSAFFLFGVALLYGYAGTVALPGIADALARGTEDRTLALIGTALLSVGLLFKIGAVPFHSWIPDVYQGAPTPITAFMAAATKVAAVGAMLRIFYVALPDLRADWRPVMWGVAILTMVVGAVMAVTQNDVKRMLAYSSVAHAGFILTGLVAANRAGLSSTMFYLLAYGFSTLGAFAVVTLVRDSRGEATDLSRWAGLGRRSPLVGGVFALFLLAFAGIPLTSGFVSKFAVFQAALEGGAVPLVLVGVVSSAIAAFFYVRVIVLMFFSEPQSDAPTIVVPSMFTAAAIAVGVVVTVVLGILPQGALDLADQAAVFFR.

14 helical membrane passes run 24 to 44 (LSPMLIVFGVAVAGVLVEAFL), 54 to 74 (LVLALGGLTAAFVAVVLLAGT), 88 to 108 (PTLFLQGTILLISIPAILIIA), 158 to 178 (APGHTEVFPLTLFAVGGMLLF), 184 to 204 (LLTMFVALEVLSLPLYLLCGL), 219 to 239 (YFLLGAFSSAFFLFGVALLYG), 263 to 283 (ALIGTALLSVGLLFKIGAVPF), 295 to 315 (PTPITAFMAAATKVAAVGAML), 331 to 351 (PVMWGVAILTMVVGAVMAVTQ), 357 to 377 (MLAYSSVAHAGFILTGLVAAN), 385 to 405 (MFYLLAYGFSTLGAFAVVTLV), 428 to 448 (VGGVFALFLLAFAGIPLTSGF), 462 to 482 (GAVPLVLVGVVSSAIAAFFYV), and 505 to 525 (MFTAAAIAVGVVVTVVLGILP).

Belongs to the complex I subunit 2 family. As to quaternary structure, NDH-1 is composed of 14 different subunits. Subunits NuoA, H, J, K, L, M, N constitute the membrane sector of the complex.

It localises to the cell membrane. It carries out the reaction a quinone + NADH + 5 H(+)(in) = a quinol + NAD(+) + 4 H(+)(out). Functionally, NDH-1 shuttles electrons from NADH, via FMN and iron-sulfur (Fe-S) centers, to quinones in the respiratory chain. The immediate electron acceptor for the enzyme in this species is believed to be a menaquinone. Couples the redox reaction to proton translocation (for every two electrons transferred, four hydrogen ions are translocated across the cytoplasmic membrane), and thus conserves the redox energy in a proton gradient. The chain is NADH-quinone oxidoreductase subunit N from Rhodococcus opacus (strain B4).